Here is an 873-residue protein sequence, read N- to C-terminus: Alanine--tRNA ligase (873 aa).

Zn(2+)-binding residues include H559, H563, C661, and H665.

The protein belongs to the class-II aminoacyl-tRNA synthetase family. The cofactor is Zn(2+).

It localises to the cytoplasm. The catalysed reaction is tRNA(Ala) + L-alanine + ATP = L-alanyl-tRNA(Ala) + AMP + diphosphate. Catalyzes the attachment of alanine to tRNA(Ala) in a two-step reaction: alanine is first activated by ATP to form Ala-AMP and then transferred to the acceptor end of tRNA(Ala). Also edits incorrectly charged Ser-tRNA(Ala) and Gly-tRNA(Ala) via its editing domain. This is Alanine--tRNA ligase from Acaryochloris marina (strain MBIC 11017).